The sequence spans 147 residues: Ribonuclease H (147 aa).

One can recognise an RNase H type-1 domain in the interval 5–141 (ARKQITLYSD…CDELARNEAE (137 aa)). 4 residues coordinate Mg(2+): D14, E52, D74, and D133.

This sequence belongs to the RNase H family. Monomer. The cofactor is Mg(2+).

Its subcellular location is the cytoplasm. The enzyme catalyses Endonucleolytic cleavage to 5'-phosphomonoester.. In terms of biological role, endonuclease that specifically degrades the RNA of RNA-DNA hybrids. The chain is Ribonuclease H from Sulfurovum sp. (strain NBC37-1).